Here is a 97-residue protein sequence, read N- to C-terminus: MNALSKAIMAETLCDELKLNKPVAKEMVENFFEELRHALENGQHVKLSGFGNFTLRDKPQRPGRNPKTGEEIPVEARRVVTFKPGLKLKTKIEKIGK.

The segment at 50 to 71 (FGNFTLRDKPQRPGRNPKTGEE) is disordered.

Belongs to the bacterial histone-like protein family. In terms of assembly, heterodimer of an alpha and a beta chain.

This protein is one of the two subunits of integration host factor, a specific DNA-binding protein that functions in genetic recombination as well as in transcriptional and translational control. The sequence is that of Integration host factor subunit alpha from Legionella pneumophila (strain Paris).